Consider the following 237-residue polypeptide: Methylthioribulose-1-phosphate dehydratase (237 aa).

Cys-97 is a binding site for substrate. Residues His-114 and His-116 each contribute to the Zn(2+) site. The active-site Proton donor/acceptor is the Glu-143. Zn(2+) is bound at residue His-199.

This sequence belongs to the aldolase class II family. MtnB subfamily. Requires Zn(2+) as cofactor.

The protein resides in the cytoplasm. It catalyses the reaction 5-(methylsulfanyl)-D-ribulose 1-phosphate = 5-methylsulfanyl-2,3-dioxopentyl phosphate + H2O. It participates in amino-acid biosynthesis; L-methionine biosynthesis via salvage pathway; L-methionine from S-methyl-5-thio-alpha-D-ribose 1-phosphate: step 2/6. Catalyzes the dehydration of methylthioribulose-1-phosphate (MTRu-1-P) into 2,3-diketo-5-methylthiopentyl-1-phosphate (DK-MTP-1-P). The chain is Methylthioribulose-1-phosphate dehydratase from Coccidioides posadasii (strain C735) (Valley fever fungus).